A 357-amino-acid chain; its full sequence is Dihydroorotate dehydrogenase (quinone) (357 aa).

Residues 67 to 71 (AGFDK) and Thr91 contribute to the FMN site. Substrate is bound at residue Lys71. 116-120 (NRMGF) lines the substrate pocket. Residues Asn153 and Asn186 each coordinate FMN. Position 186 (Asn186) interacts with substrate. The active-site Nucleophile is Ser189. Asn191 is a substrate binding site. FMN-binding residues include Lys228 and Thr256. Position 257-258 (257-258 (NT)) interacts with substrate. Residues Gly282, Gly311, and 332-333 (YT) each bind FMN.

Belongs to the dihydroorotate dehydrogenase family. Type 2 subfamily. As to quaternary structure, monomer. FMN serves as cofactor.

The protein localises to the cell membrane. The enzyme catalyses (S)-dihydroorotate + a quinone = orotate + a quinol. It participates in pyrimidine metabolism; UMP biosynthesis via de novo pathway; orotate from (S)-dihydroorotate (quinone route): step 1/1. Its function is as follows. Catalyzes the conversion of dihydroorotate to orotate with quinone as electron acceptor. The sequence is that of Dihydroorotate dehydrogenase (quinone) from Arthrobacter sp. (strain FB24).